A 163-amino-acid polypeptide reads, in one-letter code: Peptide methionine sulfoxide reductase MsrA (163 aa).

Cysteine 10 is an active-site residue.

This sequence belongs to the MsrA Met sulfoxide reductase family.

The catalysed reaction is L-methionyl-[protein] + [thioredoxin]-disulfide + H2O = L-methionyl-(S)-S-oxide-[protein] + [thioredoxin]-dithiol. The enzyme catalyses [thioredoxin]-disulfide + L-methionine + H2O = L-methionine (S)-S-oxide + [thioredoxin]-dithiol. In terms of biological role, has an important function as a repair enzyme for proteins that have been inactivated by oxidation. Catalyzes the reversible oxidation-reduction of methionine sulfoxide in proteins to methionine. This chain is Peptide methionine sulfoxide reductase MsrA, found in Vesicomyosocius okutanii subsp. Calyptogena okutanii (strain HA).